The sequence spans 552 residues: Probable protein kinase UbiB (552 aa).

Positions histidine 121–alanine 504 constitute a Protein kinase domain. ATP is bound by residues leucine 127–valine 135 and lysine 149. The Proton acceptor role is filled by aspartate 284. Helical transmembrane passes span valine 501–histidine 521 and tyrosine 526–phenylalanine 546.

Belongs to the ABC1 family. UbiB subfamily.

The protein resides in the cell inner membrane. It functions in the pathway cofactor biosynthesis; ubiquinone biosynthesis [regulation]. Is probably a protein kinase regulator of UbiI activity which is involved in aerobic coenzyme Q (ubiquinone) biosynthesis. The polypeptide is Probable protein kinase UbiB (Xylella fastidiosa (strain 9a5c)).